The following is a 106-amino-acid chain: Putative protein LRRC37A5P (106 aa).

This chain is Putative protein LRRC37A5P (LRRC37A5P), found in Homo sapiens (Human).